The primary structure comprises 286 residues: Putative inorganic pyrophosphatase C3A12.02 (286 aa).

A diphosphate-binding site is contributed by Arg-85. Mg(2+) contacts are provided by Asp-122, Asp-127, and Asp-159.

It belongs to the PPase family. The cofactor is Mg(2+).

The protein localises to the cytoplasm. The catalysed reaction is diphosphate + H2O = 2 phosphate + H(+). This is Putative inorganic pyrophosphatase C3A12.02 from Schizosaccharomyces pombe (strain 972 / ATCC 24843) (Fission yeast).